A 78-amino-acid polypeptide reads, in one-letter code: Probable [Fe-S]-dependent transcriptional repressor (78 aa).

Residues Cys56, Cys61, Cys64, and Cys70 each coordinate iron-sulfur cluster.

The protein belongs to the FeoC family.

In terms of biological role, may function as a transcriptional regulator that controls feoABC expression. The polypeptide is Probable [Fe-S]-dependent transcriptional repressor (Escherichia coli O7:K1 (strain IAI39 / ExPEC)).